Reading from the N-terminus, the 156-residue chain is Cyanate hydratase (156 aa).

Catalysis depends on residues arginine 96, glutamate 99, and serine 122.

The protein belongs to the cyanase family.

It carries out the reaction cyanate + hydrogencarbonate + 3 H(+) = NH4(+) + 2 CO2. In terms of biological role, catalyzes the reaction of cyanate with bicarbonate to produce ammonia and carbon dioxide. The protein is Cyanate hydratase of Pseudomonas aeruginosa (strain UCBPP-PA14).